A 191-amino-acid polypeptide reads, in one-letter code: Elongation factor P (191 aa).

This sequence belongs to the elongation factor P family.

The protein resides in the cytoplasm. The protein operates within protein biosynthesis; polypeptide chain elongation. Its function is as follows. Involved in peptide bond synthesis. Stimulates efficient translation and peptide-bond synthesis on native or reconstituted 70S ribosomes in vitro. Probably functions indirectly by altering the affinity of the ribosome for aminoacyl-tRNA, thus increasing their reactivity as acceptors for peptidyl transferase. The protein is Elongation factor P of Bartonella tribocorum (strain CIP 105476 / IBS 506).